The primary structure comprises 305 residues: Ribosomal RNA small subunit methyltransferase H (305 aa).

S-adenosyl-L-methionine is bound by residues 30 to 32 (GGH), aspartate 49, phenylalanine 74, aspartate 96, and glutamine 103.

This sequence belongs to the methyltransferase superfamily. RsmH family.

Its subcellular location is the cytoplasm. The catalysed reaction is cytidine(1402) in 16S rRNA + S-adenosyl-L-methionine = N(4)-methylcytidine(1402) in 16S rRNA + S-adenosyl-L-homocysteine + H(+). Specifically methylates the N4 position of cytidine in position 1402 (C1402) of 16S rRNA. The sequence is that of Ribosomal RNA small subunit methyltransferase H from Francisella tularensis subsp. novicida (strain U112).